We begin with the raw amino-acid sequence, 360 residues long: Biotin synthase (360 aa).

Residues 1–21 (MTQLNIAPASTDTAAASNNNA) are disordered. A Radical SAM core domain is found at 62–289 (NTVQLSTLLS…RAMVRLSAGR (228 aa)). The [4Fe-4S] cluster site is built by cysteine 77, cysteine 81, and cysteine 84. [2Fe-2S] cluster-binding residues include cysteine 121, cysteine 152, cysteine 212, and arginine 284.

This sequence belongs to the radical SAM superfamily. Biotin synthase family. As to quaternary structure, homodimer. Requires [4Fe-4S] cluster as cofactor. The cofactor is [2Fe-2S] cluster.

It catalyses the reaction (4R,5S)-dethiobiotin + (sulfur carrier)-SH + 2 reduced [2Fe-2S]-[ferredoxin] + 2 S-adenosyl-L-methionine = (sulfur carrier)-H + biotin + 2 5'-deoxyadenosine + 2 L-methionine + 2 oxidized [2Fe-2S]-[ferredoxin]. It participates in cofactor biosynthesis; biotin biosynthesis; biotin from 7,8-diaminononanoate: step 2/2. In terms of biological role, catalyzes the conversion of dethiobiotin (DTB) to biotin by the insertion of a sulfur atom into dethiobiotin via a radical-based mechanism. In Paraburkholderia xenovorans (strain LB400), this protein is Biotin synthase.